Here is a 402-residue protein sequence, read N- to C-terminus: Tryptophan synthase beta chain (402 aa).

N6-(pyridoxal phosphate)lysine is present on Lys88.

The protein belongs to the TrpB family. As to quaternary structure, tetramer of two alpha and two beta chains. Requires pyridoxal 5'-phosphate as cofactor.

It catalyses the reaction (1S,2R)-1-C-(indol-3-yl)glycerol 3-phosphate + L-serine = D-glyceraldehyde 3-phosphate + L-tryptophan + H2O. It participates in amino-acid biosynthesis; L-tryptophan biosynthesis; L-tryptophan from chorismate: step 5/5. Functionally, the beta subunit is responsible for the synthesis of L-tryptophan from indole and L-serine. This chain is Tryptophan synthase beta chain (trpB), found in Pasteurella multocida (strain Pm70).